The chain runs to 104 residues: Circadian clock oscillator protein KaiB (104 aa).

The protein belongs to the KaiB family. As to quaternary structure, the KaiABC complex composition changes during the circadian cycle to control KaiC phosphorylation. Complexes KaiC(6), KaiA(2-4):KaiC(6), KaiB(6):KaiC(6) and KaiC(6):KaiB(6):KaiA(12) are among the most important forms, many form cooperatively. Undergoes a major conformational rearrangment; in the free state forms homotetramers as a dimer of dimers. When bound to the CI domain of KaiC switches to a monomeric thioredoxin-fold (KaiB(fs)). KaiB(fs) binds CikA, leading it to dephosphorylate phospho-RpaA.

Functionally, key component of the KaiABC oscillator complex, which constitutes the main circadian regulator in cyanobacteria. Complex composition changes during the circadian cycle to control KaiC phosphorylation. KaiA stimulates KaiC autophosphorylation, while KaiB sequesters KaiA, leading to KaiC autodephosphorylation. Phospho-Ser-431 KaiC accumulation triggers binding of KaiB to form the KaiB(6):KaiC(6) complex, leading to changes in output regulators CikA and SasA. KaiB switches to a thioredoxin-like fold (KaiB(fs)) when bound to KaiC. KaiB(6):KaiC(6) formation exposes a site for KaiA binding that sequesters KaiA from KaiC, making the KaiC(6):KaiB(6):KaiA(12) complex that results in KaiC autodephosphorylation. A metamorphic protein which reversibly switches between an inactive tetrameric fold and a rare, thioredoxin-like monomeric fold (KaiB(fs)). KaiB(fs) binds phospho-KaiC, KaiA and CikA. KaiA and CikA compete for binding to KaiB(fs), and KaiB(fs) and SasA compete for binding to KaiC, thus the clock oscillator and output signal pathway are tightly coupled. The chain is Circadian clock oscillator protein KaiB from Trichodesmium erythraeum (strain IMS101).